The primary structure comprises 751 residues: Semaphorin-3C (751 aa).

The N-terminal stretch at 1-21 (MAVLALHAVFGIFIYFSSVKG) is a signal peptide. The Sema domain occupies 28-511 (RVFLTFNELQ…SEEGVTQVPL (484 aa)). N-linked (GlcNAc...) asparagine glycosylation occurs at N81. C101 and C112 form a disulfide bridge. A glycan (N-linked (GlcNAc...) asparagine) is linked at N123. 3 disulfides stabilise this stretch: C130/C139, C266/C378, and C290/C338. Residue N268 is glycosylated (N-linked (GlcNAc...) asparagine). An N-linked (GlcNAc...) asparagine glycan is attached at N465. C514 and C532 form a disulfide bridge. One can recognise an Ig-like C2-type domain in the interval 571–655 (AYRNAAETVQ…TENNFKQTLA (85 aa)). N585 and N586 each carry an N-linked (GlcNAc...) asparagine glycan. C643 and C709 are joined by a disulfide. Residues 712–731 (SRQQGQRREEPQKMRGDYSK) show a composition bias toward basic and acidic residues. The tract at residues 712 to 751 (SRQQGQRREEPQKMRGDYSKLKALINSRKSRNRRNQLPAS) is disordered.

This sequence belongs to the semaphorin family. In terms of tissue distribution, collapsin-1, -2, -3, and -5 bind to overlapping but distinct axon tracts.

It is found in the secreted. Its function is as follows. Induces the collapse and paralysis of neuronal growth cones. Could potentially act as repulsive cues toward specific neuronal populations. Binds to neuropilin. This chain is Semaphorin-3C (SEMA3C), found in Gallus gallus (Chicken).